The chain runs to 412 residues: Serine hydroxymethyltransferase (412 aa).

Residues leucine 117 and 121 to 123 each bind (6S)-5,6,7,8-tetrahydrofolate; that span reads GHL. N6-(pyridoxal phosphate)lysine is present on lysine 226. (6S)-5,6,7,8-tetrahydrofolate contacts are provided by residues glutamate 242 and 350–352; that span reads SPF.

Belongs to the SHMT family. Homodimer. The cofactor is pyridoxal 5'-phosphate.

It is found in the cytoplasm. It carries out the reaction (6R)-5,10-methylene-5,6,7,8-tetrahydrofolate + glycine + H2O = (6S)-5,6,7,8-tetrahydrofolate + L-serine. It participates in one-carbon metabolism; tetrahydrofolate interconversion. The protein operates within amino-acid biosynthesis; glycine biosynthesis; glycine from L-serine: step 1/1. Functionally, catalyzes the reversible interconversion of serine and glycine with tetrahydrofolate (THF) serving as the one-carbon carrier. Appears to be specific for THF as the pteridine substrate, since the use of tetrahydromethanopterin (H4MPT) is much less efficient. Also exhibits THF-independent aldolase activity toward beta-hydroxyamino acids, producing glycine and aldehydes, via a retro-aldol mechanism. Thus, is able to catalyze the cleavage of L-allo-threonine and L-threo-beta-phenylserine. This Methanosarcina barkeri (strain Fusaro / DSM 804) protein is Serine hydroxymethyltransferase.